We begin with the raw amino-acid sequence, 189 residues long: dCTP deaminase, dUMP-forming (189 aa).

Residues 101–106 (KSSLGR), aspartate 119, 127–129 (TLE), glutamine 148, tyrosine 162, and glutamine 174 each bind dCTP. Residue glutamate 129 is the Proton donor/acceptor of the active site.

It belongs to the dCTP deaminase family. As to quaternary structure, homotrimer.

The catalysed reaction is dCTP + 2 H2O = dUMP + NH4(+) + diphosphate. It functions in the pathway pyrimidine metabolism; dUMP biosynthesis; dUMP from dCTP: step 1/1. Bifunctional enzyme that catalyzes both the deamination of dCTP to dUTP and the hydrolysis of dUTP to dUMP without releasing the toxic dUTP intermediate. The chain is dCTP deaminase, dUMP-forming from Rhodococcus opacus (strain B4).